The sequence spans 377 residues: tRNA 2-selenouridine synthase (377 aa).

Residues 18-141 form the Rhodanese domain; it reads ITRGVTLIDV…LRQEAMDATD (124 aa). Cysteine 101 (S-selanylcysteine intermediate) is an active-site residue.

Belongs to the SelU family. Monomer.

The enzyme catalyses 5-methylaminomethyl-2-thiouridine(34) in tRNA + selenophosphate + (2E)-geranyl diphosphate + H2O + H(+) = 5-methylaminomethyl-2-selenouridine(34) in tRNA + (2E)-thiogeraniol + phosphate + diphosphate. It catalyses the reaction 5-methylaminomethyl-2-thiouridine(34) in tRNA + (2E)-geranyl diphosphate = 5-methylaminomethyl-S-(2E)-geranyl-thiouridine(34) in tRNA + diphosphate. The catalysed reaction is 5-methylaminomethyl-S-(2E)-geranyl-thiouridine(34) in tRNA + selenophosphate + H(+) = 5-methylaminomethyl-2-(Se-phospho)selenouridine(34) in tRNA + (2E)-thiogeraniol. It carries out the reaction 5-methylaminomethyl-2-(Se-phospho)selenouridine(34) in tRNA + H2O = 5-methylaminomethyl-2-selenouridine(34) in tRNA + phosphate. Functionally, involved in the post-transcriptional modification of the uridine at the wobble position (U34) of tRNA(Lys), tRNA(Glu) and tRNA(Gln). Catalyzes the conversion of 2-thiouridine (S2U-RNA) to 2-selenouridine (Se2U-RNA). Acts in a two-step process involving geranylation of 2-thiouridine (S2U) to S-geranyl-2-thiouridine (geS2U) and subsequent selenation of the latter derivative to 2-selenouridine (Se2U) in the tRNA chain. This chain is tRNA 2-selenouridine synthase, found in Cronobacter sakazakii (strain ATCC BAA-894) (Enterobacter sakazakii).